A 207-amino-acid chain; its full sequence is Small ribosomal subunit protein uS4 (207 aa).

The region spanning 98-164 (RRLDNVVYRM…AKFKNLVEVN (67 aa)) is the S4 RNA-binding domain.

Belongs to the universal ribosomal protein uS4 family. Part of the 30S ribosomal subunit. Contacts protein S5. The interaction surface between S4 and S5 is involved in control of translational fidelity.

Functionally, one of the primary rRNA binding proteins, it binds directly to 16S rRNA where it nucleates assembly of the body of the 30S subunit. With S5 and S12 plays an important role in translational accuracy. This is Small ribosomal subunit protein uS4 from Clostridioides difficile (strain 630) (Peptoclostridium difficile).